Here is a 354-residue protein sequence, read N- to C-terminus: MELPKLLISLFLFSFSSFFLGAESDYPQHSNLKRLRPNRLFVFGDSYADTGNIRKSLSDSWKIPYGITFPQKPSGRFSDGRVATDFLARYLGIKSPIPYTWKDYAGKERLLYGMNYAYGGTGVFKTKDNPLPNMTTQIDYFQRVLAAGNIYSPSDLPSSLALVSVAGNDYATFLALKRPLTELPAFMKQVVDQIAVNAMRIHKLGVNKIVIPSMQPLGCLPSITVFNSFQRCNATDNASTNLHNYLLHKAIARLNNETKPSTFVVLDHYNAFLTVFKNKGPEPGVSRFGNPLKPCCVGVNSSYDCSNVDEKGEKKYIICEDPKAAFFWDIFHPSEEGWRSVYSVLHKHLKAIWI.

A signal peptide spans 1–24 (MELPKLLISLFLFSFSSFFLGAES). The active-site Nucleophile is S46. Residues N133, N233, N237, N256, and N300 are each glycosylated (N-linked (GlcNAc...) asparagine). Catalysis depends on residues D329 and H332.

This sequence belongs to the 'GDSL' lipolytic enzyme family.

Its subcellular location is the secreted. This chain is GDSL esterase/lipase At3g09930, found in Arabidopsis thaliana (Mouse-ear cress).